Here is a 177-residue protein sequence, read N- to C-terminus: Large ribosomal subunit protein uL5 (177 aa).

The protein belongs to the universal ribosomal protein uL5 family. As to quaternary structure, part of the 50S ribosomal subunit; part of the 5S rRNA/L5/L18/L25 subcomplex. Contacts the 5S rRNA and the P site tRNA. Forms a bridge to the 30S subunit in the 70S ribosome.

This is one of the proteins that bind and probably mediate the attachment of the 5S RNA into the large ribosomal subunit, where it forms part of the central protuberance. In the 70S ribosome it contacts protein S13 of the 30S subunit (bridge B1b), connecting the 2 subunits; this bridge is implicated in subunit movement. Contacts the P site tRNA; the 5S rRNA and some of its associated proteins might help stabilize positioning of ribosome-bound tRNAs. The chain is Large ribosomal subunit protein uL5 from Wolbachia sp. subsp. Brugia malayi (strain TRS).